Here is a 370-residue protein sequence, read N- to C-terminus: Lipoyl synthase 1, chloroplastic (370 aa).

Disordered regions lie at residues 1–25 (MMQS…PVCR) and 39–67 (EAAP…KKPA). The N-terminal 37 residues, 1–37 (MMQSSLARPLPRPPIRPACGNPVCRSRPGSVSVARCR), are a transit peptide targeting the chloroplast. Residues Cys95, Cys100, Cys106, Cys132, Cys136, Cys139, and Ser347 each coordinate [4Fe-4S] cluster. A Radical SAM core domain is found at 115–336 (GEGDGIATAT…KEYGESVGFR (222 aa)).

This sequence belongs to the radical SAM superfamily. Lipoyl synthase family. [4Fe-4S] cluster is required as a cofactor.

Its subcellular location is the plastid. The protein resides in the chloroplast. It catalyses the reaction [[Fe-S] cluster scaffold protein carrying a second [4Fe-4S](2+) cluster] + N(6)-octanoyl-L-lysyl-[protein] + 2 oxidized [2Fe-2S]-[ferredoxin] + 2 S-adenosyl-L-methionine + 4 H(+) = [[Fe-S] cluster scaffold protein] + N(6)-[(R)-dihydrolipoyl]-L-lysyl-[protein] + 4 Fe(3+) + 2 hydrogen sulfide + 2 5'-deoxyadenosine + 2 L-methionine + 2 reduced [2Fe-2S]-[ferredoxin]. Its pathway is protein modification; protein lipoylation via endogenous pathway; protein N(6)-(lipoyl)lysine from octanoyl-[acyl-carrier-protein]: step 2/2. In terms of biological role, catalyzes the radical-mediated insertion of two sulfur atoms into the C-6 and C-8 positions of the octanoyl moiety bound to the lipoyl domains of lipoate-dependent enzymes, thereby converting the octanoylated domains into lipoylated derivatives. This is Lipoyl synthase 1, chloroplastic from Oryza sativa subsp. indica (Rice).